The chain runs to 265 residues: Mlc titration factor A (265 aa).

4 residues coordinate Zn(2+): His111, His148, His152, and Glu211.

It belongs to the MtfA family. As to quaternary structure, interacts with Mlc. Requires Zn(2+) as cofactor.

It localises to the cytoplasm. In terms of biological role, involved in the modulation of the activity of the glucose-phosphotransferase system (glucose-PTS). Interacts with the transcriptional repressor Mlc, preventing its interaction with DNA and leading to the modulation of expression of genes regulated by Mlc, including ptsG, which encodes the PTS system glucose-specific EIICB component. Its function is as follows. Shows zinc-dependent metallopeptidase activity. In Escherichia fergusonii, this protein is Mlc titration factor A.